The sequence spans 395 residues: Flap endonuclease 1 (395 aa).

The segment at 1–104 is N-domain; sequence MGIKHLYQII…GELAKRFMRK (104 aa). Asp34 is a binding site for Mg(2+). Residues Arg47 and Arg70 each coordinate DNA. Residues Asp86, Glu158, Glu160, Asp179, and Asp181 each coordinate Mg(2+). The I-domain stretch occupies residues 122-253; the sequence is EVEKFSRRTV…NTALKLIRDH (132 aa). Position 158 (Glu158) interacts with DNA. DNA-binding residues include Gly231 and Asp233. Position 233 (Asp233) interacts with Mg(2+). The segment at 341-349 is interaction with PCNA; sequence QQSRLEGFF. The span at 360–389 shows a compositional bias: basic and acidic residues; the sequence is AVLKRKHEEKLELQKKKKKEDSKAKKEAKS. A disordered region spans residues 360-395; the sequence is AVLKRKHEEKLELQKKKKKEDSKAKKEAKSKPRGTT.

This sequence belongs to the XPG/RAD2 endonuclease family. FEN1 subfamily. In terms of assembly, interacts with PCNA. Three molecules of FEN1 bind to one PCNA trimer with each molecule binding to one PCNA monomer. PCNA stimulates the nuclease activity without altering cleavage specificity. Requires Mg(2+) as cofactor. In terms of processing, phosphorylated. Phosphorylation upon DNA damage induces relocalization to the nuclear plasma.

The protein resides in the nucleus. It is found in the nucleolus. The protein localises to the nucleoplasm. It localises to the mitochondrion. Its function is as follows. Structure-specific nuclease with 5'-flap endonuclease and 5'-3' exonuclease activities involved in DNA replication and repair. During DNA replication, cleaves the 5'-overhanging flap structure that is generated by displacement synthesis when DNA polymerase encounters the 5'-end of a downstream Okazaki fragment. It enters the flap from the 5'-end and then tracks to cleave the flap base, leaving a nick for ligation. Also involved in the long patch base excision repair (LP-BER) pathway, by cleaving within the apurinic/apyrimidinic (AP) site-terminated flap. Acts as a genome stabilization factor that prevents flaps from equilibrating into structures that lead to duplications and deletions. Also possesses 5'-3' exonuclease activity on nicked or gapped double-stranded DNA, and exhibits RNase H activity. Also involved in replication and repair of rDNA and in repairing mitochondrial DNA. The polypeptide is Flap endonuclease 1 (Ajellomyces capsulatus (strain H143) (Darling's disease fungus)).